Reading from the N-terminus, the 235-residue chain is Segregation and condensation protein A (235 aa).

It belongs to the ScpA family. As to quaternary structure, component of a cohesin-like complex composed of ScpA, ScpB and the Smc homodimer, in which ScpA and ScpB bind to the head domain of Smc. The presence of the three proteins is required for the association of the complex with DNA.

It is found in the cytoplasm. Its function is as follows. Participates in chromosomal partition during cell division. May act via the formation of a condensin-like complex containing Smc and ScpB that pull DNA away from mid-cell into both cell halves. This is Segregation and condensation protein A from Streptococcus equi subsp. equi (strain 4047).